A 241-amino-acid polypeptide reads, in one-letter code: ATP synthase subunit a (241 aa).

The next 5 membrane-spanning stretches (helical) occupy residues 30–50 (GQVF…VVVG), 91–111 (FIGT…LVPW), 128–148 (INTT…AGLS), 193–213 (LVVA…VMFL), and 214–234 (GLFT…YYIG).

Belongs to the ATPase A chain family. F-type ATPases have 2 components, CF(1) - the catalytic core - and CF(0) - the membrane proton channel. CF(1) has five subunits: alpha(3), beta(3), gamma(1), delta(1), epsilon(1). CF(0) has four main subunits: a, b, b' and c.

It is found in the cellular thylakoid membrane. In terms of biological role, key component of the proton channel; it plays a direct role in the translocation of protons across the membrane. The sequence is that of ATP synthase subunit a from Prochlorococcus marinus (strain MIT 9313).